A 581-amino-acid polypeptide reads, in one-letter code: Proline--tRNA ligase (581 aa).

This sequence belongs to the class-II aminoacyl-tRNA synthetase family. ProS type 1 subfamily. As to quaternary structure, homodimer.

Its subcellular location is the cytoplasm. It carries out the reaction tRNA(Pro) + L-proline + ATP = L-prolyl-tRNA(Pro) + AMP + diphosphate. Its function is as follows. Catalyzes the attachment of proline to tRNA(Pro) in a two-step reaction: proline is first activated by ATP to form Pro-AMP and then transferred to the acceptor end of tRNA(Pro). As ProRS can inadvertently accommodate and process non-cognate amino acids such as alanine and cysteine, to avoid such errors it has two additional distinct editing activities against alanine. One activity is designated as 'pretransfer' editing and involves the tRNA(Pro)-independent hydrolysis of activated Ala-AMP. The other activity is designated 'posttransfer' editing and involves deacylation of mischarged Ala-tRNA(Pro). The misacylated Cys-tRNA(Pro) is not edited by ProRS. This Acidovorax ebreus (strain TPSY) (Diaphorobacter sp. (strain TPSY)) protein is Proline--tRNA ligase.